A 535-amino-acid chain; its full sequence is Bifunctional purine biosynthesis protein PurH (535 aa).

Residues 6–151 enclose the MGS-like domain; sequence TRLPIRRALI…KNHKDVAIVV (146 aa).

The protein belongs to the PurH family.

The catalysed reaction is (6R)-10-formyltetrahydrofolate + 5-amino-1-(5-phospho-beta-D-ribosyl)imidazole-4-carboxamide = 5-formamido-1-(5-phospho-D-ribosyl)imidazole-4-carboxamide + (6S)-5,6,7,8-tetrahydrofolate. It catalyses the reaction IMP + H2O = 5-formamido-1-(5-phospho-D-ribosyl)imidazole-4-carboxamide. The protein operates within purine metabolism; IMP biosynthesis via de novo pathway; 5-formamido-1-(5-phospho-D-ribosyl)imidazole-4-carboxamide from 5-amino-1-(5-phospho-D-ribosyl)imidazole-4-carboxamide (10-formyl THF route): step 1/1. It participates in purine metabolism; IMP biosynthesis via de novo pathway; IMP from 5-formamido-1-(5-phospho-D-ribosyl)imidazole-4-carboxamide: step 1/1. In Pseudomonas aeruginosa (strain LESB58), this protein is Bifunctional purine biosynthesis protein PurH.